Consider the following 201-residue polypeptide: Potassium-transporting ATPase KdpC subunit (201 aa).

The chain crosses the membrane as a helical span at residues 12–34 (LLALTMITGLAYPLAVTGLATVL). The disordered stretch occupies residues 69-102 (RPSATVAPDPADSSKTVSAPYNAANSGGSNLGPT). Residues 81-101 (SSKTVSAPYNAANSGGSNLGP) show a composition bias toward polar residues.

It belongs to the KdpC family. The system is composed of three essential subunits: KdpA, KdpB and KdpC.

The protein resides in the cell inner membrane. Its function is as follows. Part of the high-affinity ATP-driven potassium transport (or Kdp) system, which catalyzes the hydrolysis of ATP coupled with the electrogenic transport of potassium into the cytoplasm. This subunit acts as a catalytic chaperone that increases the ATP-binding affinity of the ATP-hydrolyzing subunit KdpB by the formation of a transient KdpB/KdpC/ATP ternary complex. The sequence is that of Potassium-transporting ATPase KdpC subunit from Rhodopseudomonas palustris (strain TIE-1).